Here is a 335-residue protein sequence, read N- to C-terminus: Dolichyl-diphosphooligosaccharide--protein glycosyltransferase subunit MAGT1 (335 aa).

A signal peptide spans M1–A29. At Q30 to P184 the chain is on the extracellular side. The Thioredoxin domain maps to W47 to D175. N71 carries N-linked (GlcNAc...) asparagine glycosylation. A disulfide bond links C87 and C90. The chain crosses the membrane as a helical span at residues N185–L205. At R206–N209 the chain is on the cytoplasmic side. Residues M210–M230 form a helical membrane-spanning segment. At T231 to H270 the chain is on the extracellular side. A helical transmembrane segment spans residues I271–T291. Residues S292–K300 lie on the Cytoplasmic side of the membrane. A helical transmembrane segment spans residues I301–F321. At R322 to S335 the chain is on the extracellular side.

This sequence belongs to the OST3/OST6 family. As to quaternary structure, accessory component of the STT3B-containing form of the oligosaccharyltransferase (OST) complex. OST exists in two different complex forms which contain common core subunits RPN1, RPN2, OST48, OST4, DAD1 and TMEM258, either STT3A or STT3B as catalytic subunits, and form-specific accessory subunits. OST can form stable complexes with the Sec61 complex or with both the Sec61 and TRAP complexes. The association of TUSC3 or MAGT1 with the STT3B-containing complex seems to be mutually exclusvice.

The protein resides in the cell membrane. It localises to the endoplasmic reticulum. The protein localises to the endoplasmic reticulum membrane. It participates in protein modification; protein glycosylation. Functionally, accessory component of the STT3B-containing form of the N-oligosaccharyl transferase (OST) complex which catalyzes the transfer of a high mannose oligosaccharide from a lipid-linked oligosaccharide donor to an asparagine residue within an Asn-X-Ser/Thr consensus motif in nascent polypeptide chains. Involved in N-glycosylation of STT3B-dependent substrates. Specifically required for the glycosylation of a subset of acceptor sites that are near cysteine residues; in this function seems to act redundantly with TUSC3. In its oxidized form proposed to form transient mixed disulfides with a glycoprotein substrate to facilitate access of STT3B to the unmodified acceptor site. Also has oxidoreductase-independent functions in the STT3B-containing OST complex possibly involving substrate recognition. Could indirectly play a role in Mg(2+) transport in epithelial cells. In Pongo abelii (Sumatran orangutan), this protein is Dolichyl-diphosphooligosaccharide--protein glycosyltransferase subunit MAGT1.